Reading from the N-terminus, the 253-residue chain is Probable proteasome subunit alpha type-7 (253 aa).

At Ser104 the chain carries Phosphoserine.

Belongs to the peptidase T1A family. In terms of assembly, the 26S proteasome consists of a 20S proteasome core and two 19S regulatory subunits. The 20S proteasome core is composed of 28 subunits that are arranged in four stacked rings, resulting in a barrel-shaped structure. The two end rings are each formed by seven alpha subunits, and the two central rings are each formed by seven beta subunits. The catalytic chamber with the active sites is on the inside of the barrel.

It is found in the cytoplasm. Its subcellular location is the nucleus. The proteasome is a multicatalytic proteinase complex which is characterized by its ability to cleave peptides with Arg, Phe, Tyr, Leu, and Glu adjacent to the leaving group at neutral or slightly basic pH. The proteasome has an ATP-dependent proteolytic activity. This chain is Probable proteasome subunit alpha type-7 (pre10), found in Schizosaccharomyces pombe (strain 972 / ATCC 24843) (Fission yeast).